The following is a 318-amino-acid chain: MSVDQTLYSRARAAMADPTCAGPATFTAAGAFSQPDLMAFSLPEEEPIWGFDTIAPSMASWQGKMEQQTFCNPNMERGLKNTHVRNGQPTPPPFDDKKLQTPMGEMYPVAQYAFNSSPPEYAPPKHRSSLSEQSQTDGYGVSTRRRKASAVDQSEQQQDREKREKFLERNRLAASKCRQKKKEHTKLLETRFREVSSKKGELESEIEHLRSEVLNLKNEMLRHAQCGDEAIKIHLAQMVRLITSKDTPNRDLVSPMRSPEQMTASTPHGLSFGFDGPMQLPSEMGSPLDQRRDSEQSIMTESSYTFSTDDSFEELINV.

Disordered regions lie at residues 79–100 and 114–164; these read LKNT…KKLQ and FNSS…EKRE. The interval 160-199 is basic motif; it reads REKREKFLERNRLAASKCRQKKKEHTKLLETRFREVSSKK. One can recognise a bZIP domain in the interval 160-223; the sequence is REKREKFLER…LNLKNEMLRH (64 aa). The interval 202–216 is leucine-zipper; sequence LESEIEHLRSEVLNL. A disordered region spans residues 247–304; that stretch reads TPNRDLVSPMRSPEQMTASTPHGLSFGFDGPMQLPSEMGSPLDQRRDSEQSIMTESSY.

The protein belongs to the bZIP family. ATF subfamily.

It is found in the nucleus. Its function is as follows. Transcription factor that acts as a key player in the regulatory circuit that integrates secondary metabolism and cellular response to oxidative stress. Regulates the genes involved in development, stress response, and secondary metabolism through direct binding to their promoters. Particularly involved in the resistance to oxidative stress in asexual conidiospores. Binds aflatoxin gene promoters carrying the cAMP-response element (CRE1) under aflatoxin-inducing conditions. The sequence is that of Basic leucine zipper (bZIP) transcription factor atfB from Aspergillus parasiticus (strain ATCC 56775 / NRRL 5862 / SRRC 143 / SU-1).